A 337-amino-acid polypeptide reads, in one-letter code: Lipoyl synthase (337 aa).

Positions 81, 86, 92, 107, 111, 114, and 323 each coordinate [4Fe-4S] cluster. Positions 93–312 (FSHGTATFMI…EEYGNALGFS (220 aa)) constitute a Radical SAM core domain.

This sequence belongs to the radical SAM superfamily. Lipoyl synthase family. [4Fe-4S] cluster is required as a cofactor.

Its subcellular location is the cytoplasm. It carries out the reaction [[Fe-S] cluster scaffold protein carrying a second [4Fe-4S](2+) cluster] + N(6)-octanoyl-L-lysyl-[protein] + 2 oxidized [2Fe-2S]-[ferredoxin] + 2 S-adenosyl-L-methionine + 4 H(+) = [[Fe-S] cluster scaffold protein] + N(6)-[(R)-dihydrolipoyl]-L-lysyl-[protein] + 4 Fe(3+) + 2 hydrogen sulfide + 2 5'-deoxyadenosine + 2 L-methionine + 2 reduced [2Fe-2S]-[ferredoxin]. It functions in the pathway protein modification; protein lipoylation via endogenous pathway; protein N(6)-(lipoyl)lysine from octanoyl-[acyl-carrier-protein]: step 2/2. Catalyzes the radical-mediated insertion of two sulfur atoms into the C-6 and C-8 positions of the octanoyl moiety bound to the lipoyl domains of lipoate-dependent enzymes, thereby converting the octanoylated domains into lipoylated derivatives. In Xanthomonas oryzae pv. oryzae (strain MAFF 311018), this protein is Lipoyl synthase.